We begin with the raw amino-acid sequence, 989 residues long: Zinc finger SWIM domain-containing protein 4 (989 aa).

The tract at residues 1 to 32 (MEPPAAKRSRGCPAGPEERDAGAGAARGRGRP) is disordered. The SWIM-type zinc-finger motif lies at 139–176 (YHVSISFDRCKITSVSCGCDNRDLFYCAHVVALSLYRI).

This Homo sapiens (Human) protein is Zinc finger SWIM domain-containing protein 4 (ZSWIM4).